A 455-amino-acid polypeptide reads, in one-letter code: Argininosuccinate lyase (455 aa).

This sequence belongs to the lyase 1 family. Argininosuccinate lyase subfamily.

It is found in the cytoplasm. The enzyme catalyses 2-(N(omega)-L-arginino)succinate = fumarate + L-arginine. The protein operates within amino-acid biosynthesis; L-arginine biosynthesis; L-arginine from L-ornithine and carbamoyl phosphate: step 3/3. The protein is Argininosuccinate lyase of Shewanella baltica (strain OS155 / ATCC BAA-1091).